A 754-amino-acid chain; its full sequence is 5-methyltetrahydropteroyltriglutamate--homocysteine methyltransferase (754 aa).

5-methyltetrahydropteroyltri-L-glutamate is bound by residues 17–20 and K117; that span reads RELK. L-homocysteine contacts are provided by residues 431–433 and E484; that span reads IGS. L-methionine contacts are provided by residues 431–433 and E484; that span reads IGS. 5-methyltetrahydropteroyltri-L-glutamate is bound by residues 515–516 and W561; that span reads RC. Position 599 (D599) interacts with L-homocysteine. D599 contributes to the L-methionine binding site. E605 is a 5-methyltetrahydropteroyltri-L-glutamate binding site. Zn(2+) contacts are provided by H641, C643, and E665. The active-site Proton donor is the H694. C726 serves as a coordination point for Zn(2+).

It belongs to the vitamin-B12 independent methionine synthase family. Requires Zn(2+) as cofactor.

It carries out the reaction 5-methyltetrahydropteroyltri-L-glutamate + L-homocysteine = tetrahydropteroyltri-L-glutamate + L-methionine. The protein operates within amino-acid biosynthesis; L-methionine biosynthesis via de novo pathway; L-methionine from L-homocysteine (MetE route): step 1/1. Catalyzes the transfer of a methyl group from 5-methyltetrahydrofolate to homocysteine resulting in methionine formation. The chain is 5-methyltetrahydropteroyltriglutamate--homocysteine methyltransferase from Klebsiella pneumoniae subsp. pneumoniae (strain ATCC 700721 / MGH 78578).